The sequence spans 62 residues: Potassium channel toxin alpha-KTx 18.3 (62 aa).

Residues 1 to 26 form the signal peptide; it reads MHFSGVAFILISMVLIGSIFETTVEA. Intrachain disulfides connect cysteine 34/cysteine 53, cysteine 39/cysteine 58, and cysteine 43/cysteine 60.

The protein belongs to the short scorpion toxin superfamily. Potassium channel inhibitor family. Alpha-KTx 18 subfamily. Expressed by the venom gland.

The protein resides in the secreted. Probable voltage-gated potassium channel inhibitor. The chain is Potassium channel toxin alpha-KTx 18.3 from Tityus discrepans (Venezuelan scorpion).